The following is a 97-amino-acid chain: Large ribosomal subunit protein bL28 (97 aa).

Belongs to the bacterial ribosomal protein bL28 family.

The chain is Large ribosomal subunit protein bL28 from Bartonella henselae (strain ATCC 49882 / DSM 28221 / CCUG 30454 / Houston 1) (Rochalimaea henselae).